Consider the following 270-residue polypeptide: 4-hydroxy-tetrahydrodipicolinate reductase (270 aa).

NAD(+)-binding positions include 9–14 and glutamate 35; that span reads GAGGRM. Residue arginine 36 coordinates NADP(+). Residues 99–101 and 123–126 contribute to the NAD(+) site; these read GTT and ASNF. Histidine 156 (proton donor/acceptor) is an active-site residue. Histidine 157 serves as a coordination point for (S)-2,3,4,5-tetrahydrodipicolinate. Lysine 160 (proton donor) is an active-site residue. 166-167 contacts (S)-2,3,4,5-tetrahydrodipicolinate; it reads GT.

The protein belongs to the DapB family.

The protein resides in the cytoplasm. It carries out the reaction (S)-2,3,4,5-tetrahydrodipicolinate + NAD(+) + H2O = (2S,4S)-4-hydroxy-2,3,4,5-tetrahydrodipicolinate + NADH + H(+). It catalyses the reaction (S)-2,3,4,5-tetrahydrodipicolinate + NADP(+) + H2O = (2S,4S)-4-hydroxy-2,3,4,5-tetrahydrodipicolinate + NADPH + H(+). The protein operates within amino-acid biosynthesis; L-lysine biosynthesis via DAP pathway; (S)-tetrahydrodipicolinate from L-aspartate: step 4/4. Functionally, catalyzes the conversion of 4-hydroxy-tetrahydrodipicolinate (HTPA) to tetrahydrodipicolinate. The sequence is that of 4-hydroxy-tetrahydrodipicolinate reductase from Haemophilus influenzae (strain PittGG).